The chain runs to 1025 residues: Multidrug resistance protein MdtC (1025 aa).

The next 12 helical transmembrane spans lie at 3 to 23, 333 to 353, 360 to 380, 387 to 407, 431 to 451, 463 to 483, 528 to 548, 853 to 873, 875 to 895, 897 to 917, 953 to 973, and 984 to 1004; these read FFAL…AITL, EVEQ…FLFL, IIPA…MYLC, LSLM…IVVL, VGFT…PLLL, FAVT…TLTP, LVGV…ISIP, VILI…LYES, VHPL…LLAL, LFNA…IGIV, PIMM…LSGG, and ITIV…TPVV.

Belongs to the resistance-nodulation-cell division (RND) (TC 2.A.6) family. MdtC subfamily. Part of a tripartite efflux system composed of MdtA, MdtB and MdtC. MdtC forms a heteromultimer with MdtB.

Its subcellular location is the cell inner membrane. In terms of biological role, the MdtABC tripartite complex confers resistance against novobiocin and deoxycholate. The chain is Multidrug resistance protein MdtC from Escherichia coli O139:H28 (strain E24377A / ETEC).